The primary structure comprises 406 residues: Testis-specific Y-encoded-like protein 4 (406 aa).

Disordered regions lie at residues 1–63, 81–121, 161–189, and 387–406; these read MNGV…EHCG, GLED…AKPK, EAGA…TRPR, and VRVP…FQSG. The segment covering 8–20 has biased composition (polar residues); it reads NELSLANTTTPSH. Low complexity predominate over residues 93–102; sequence DAPSAPVAAD. Over residues 167-188 the composition is skewed to basic and acidic residues; the sequence is QEKKGLQKEKKVAGGGKEETRP.

Belongs to the nucleosome assembly protein (NAP) family.

The polypeptide is Testis-specific Y-encoded-like protein 4 (Tspyl4) (Mus musculus (Mouse)).